We begin with the raw amino-acid sequence, 800 residues long: Phenylalanine--tRNA ligase beta subunit (800 aa).

The region spanning 39–154 is the tRNA-binding domain; the sequence is TKDIKKLVVG…EAVKPGTDAL (116 aa). In terms of domain architecture, B5 spans 408 to 483; that stretch reads SFVTPIEITA…RIYGYDEIPS (76 aa). Mg(2+)-binding residues include Asp-461, Asp-467, Glu-470, and Glu-471. The 93-residue stretch at 708 to 800 folds into the FDX-ACB domain; it reads PRFPGVTRDI…ALKKHGAIIR (93 aa).

Belongs to the phenylalanyl-tRNA synthetase beta subunit family. Type 1 subfamily. Tetramer of two alpha and two beta subunits. Mg(2+) serves as cofactor.

The protein resides in the cytoplasm. The catalysed reaction is tRNA(Phe) + L-phenylalanine + ATP = L-phenylalanyl-tRNA(Phe) + AMP + diphosphate + H(+). The protein is Phenylalanine--tRNA ligase beta subunit of Staphylococcus epidermidis (strain ATCC 12228 / FDA PCI 1200).